Here is a 399-residue protein sequence, read N- to C-terminus: Protein DDI1 homolog 2 (399 aa).

Residues 1-81 enclose the Ubiquitin-like domain; the sequence is MLLTVYCVRR…VILRQKENAD (81 aa). The tract at residues 99–134 is disordered; sequence IAVPGTSSPRQRQPPGTQQSHSSPGEITSSPQGLDN. A compositionally biased stretch (polar residues) spans 103–131; the sequence is GTSSPRQRQPPGTQQSHSSPGEITSSPQG. Threonine 104 is modified (phosphothreonine). Residues serine 106, serine 121, serine 128, serine 150, and serine 194 each carry the phosphoserine modification. The active site involves aspartate 252. The Ubiquitin-binding signature appears at 376–395; the sequence is EEIADQELAEALQKSAEDAE.

Belongs to the DDI1 family. In terms of assembly, homodimer. Interacts with MCM6; PCNA; PSMD4; PSMD8; RPA2 and RPN2. Interacts with RTF2.

It localises to the cytoplasm. It is found in the cytosol. Its subcellular location is the chromosome. Functionally, aspartic protease that mediates the cleavage of NFE2L1/NRF1 at 'Leu-104', thereby promoting release of NFE2L1/NRF1 from the endoplasmic reticulum membrane. Ubiquitination of NFE2L1/NRF1 is a prerequisite for cleavage, suggesting that DDI2 specifically recognizes and binds ubiquitinated NFE2L1/NRF1. Seems to act as a proteasomal shuttle which links the proteasome and replication fork proteins like RTF2. Required, with DDI1, for cellular survival following replication stress. Together or redudantly with DDI1, removes RTF2 from stalled forks to allow cell cycle progression after replication stress and maintains genome integrity. This chain is Protein DDI1 homolog 2, found in Homo sapiens (Human).